The following is a 207-amino-acid chain: Dephospho-CoA kinase (207 aa).

The DPCK domain occupies 4-203 (VIGLTGGIAS…EEGYIEKPNY (200 aa)). Residue 12-17 (ASGKST) coordinates ATP.

Belongs to the CoaE family.

The protein resides in the cytoplasm. The catalysed reaction is 3'-dephospho-CoA + ATP = ADP + CoA + H(+). The protein operates within cofactor biosynthesis; coenzyme A biosynthesis; CoA from (R)-pantothenate: step 5/5. Catalyzes the phosphorylation of the 3'-hydroxyl group of dephosphocoenzyme A to form coenzyme A. This is Dephospho-CoA kinase from Staphylococcus aureus (strain MRSA252).